A 537-amino-acid polypeptide reads, in one-letter code: RNA polymerase sigma-54 factor 2 (537 aa).

The interval 52-90 is disordered; that stretch reads ANDEASGGEAPAEAGQFSDSDGGHNDEPGGGPGEAFEPG. The segment covering 55–66 has biased composition (low complexity); sequence EASGGEAPAEAG. Residues 403–422 constitute a DNA-binding region (H-T-H motif); it reads NLKAVADAIQMHESTVSRVT. The RPON box signature appears at 492 to 500; the sequence is ARRTVAKYR. Residues 507 to 537 form a disordered region; it reads SSVQRRRDKQSALGNVLSTAMSDRSRNPEPA. The span at 518–528 shows a compositional bias: polar residues; sequence ALGNVLSTAMS.

It belongs to the sigma-54 factor family.

Its function is as follows. Sigma factors are initiation factors that promote the attachment of RNA polymerase to specific initiation sites and are then released. This sigma factor is responsible for the expression of the nitrogen fixation genes. The protein is RNA polymerase sigma-54 factor 2 (rpoN2) of Bradyrhizobium diazoefficiens (strain JCM 10833 / BCRC 13528 / IAM 13628 / NBRC 14792 / USDA 110).